The sequence spans 248 residues: Probable transcriptional regulatory protein RHE_CH03475 (248 aa).

Belongs to the TACO1 family.

The protein localises to the cytoplasm. In Rhizobium etli (strain ATCC 51251 / DSM 11541 / JCM 21823 / NBRC 15573 / CFN 42), this protein is Probable transcriptional regulatory protein RHE_CH03475.